A 194-amino-acid chain; its full sequence is Putative manganese efflux pump MntP (194 aa).

Transmembrane regions (helical) follow at residues 3-23 (FYAT…VAVC), 40-60 (GFIF…LGLY), 65-85 (IIQW…GRMI), 109-129 (LIAT…GLAF), 134-154 (IVHT…LGML), and 169-189 (IIGG…HLDL).

This sequence belongs to the MntP (TC 9.B.29) family.

It is found in the cell inner membrane. In terms of biological role, probably functions as a manganese efflux pump. In Proteus mirabilis (strain HI4320), this protein is Putative manganese efflux pump MntP.